A 1390-amino-acid polypeptide reads, in one-letter code: DNA-directed RNA polymerase subunit beta (1390 aa).

The protein belongs to the RNA polymerase beta chain family. The RNAP catalytic core consists of 2 alpha, 1 beta, 1 beta' and 1 omega subunit. When a sigma factor is associated with the core the holoenzyme is formed, which can initiate transcription.

It catalyses the reaction RNA(n) + a ribonucleoside 5'-triphosphate = RNA(n+1) + diphosphate. Functionally, DNA-dependent RNA polymerase catalyzes the transcription of DNA into RNA using the four ribonucleoside triphosphates as substrates. In Rhodopseudomonas palustris (strain HaA2), this protein is DNA-directed RNA polymerase subunit beta.